Consider the following 165-residue polypeptide: Large ribosomal subunit protein uL15 (165 aa).

A compositionally biased stretch (basic residues) spans 1 to 30; sequence MTNKKRRQRGSRTHGGGTHKNRRGAGHRGG. 2 disordered regions span residues 1-39 and 137-165; these read MTNK…RAKH and AGGE…DDEA. The span at 150–165 shows a compositional bias: acidic residues; sequence AADESENTSDDEDDEA.

This sequence belongs to the universal ribosomal protein uL15 family. As to quaternary structure, part of the 50S ribosomal subunit.

Binds to the 23S rRNA. This chain is Large ribosomal subunit protein uL15, found in Halorubrum lacusprofundi (strain ATCC 49239 / DSM 5036 / JCM 8891 / ACAM 34).